Here is a 667-residue protein sequence, read N- to C-terminus: Sorting nexin mvp1 (667 aa).

Residues 221–268 (AGNLHSQQPPKFSVDSSVDDNAITPRKPFSKIPNRLSPSTQPLLSNSR) are disordered. The span at 224-236 (LHSQQPPKFSVDS) shows a compositional bias: polar residues. The PX domain occupies 279-398 (TSFPASLEMN…RVFFTEPNVF (120 aa)). A 1,2-diacyl-sn-glycero-3-phospho-(1D-myo-inositol-3-phosphate) contacts are provided by arginine 320, serine 322, and lysine 346. The segment at 574-594 (ANSDESGRNRTFLNRSSKKRA) is disordered.

The protein belongs to the sorting nexin family. Homodimer. Forms an autoinhibited tetramer consisting of 2 homodimers that self-interact, wherein the membrane-interacting BAR surfaces are sequestered and the PX lipid-binding sites are occluded. Interacts with Vps1.

It is found in the cytoplasm. The protein localises to the endosome membrane. Required for vacuolar protein sorting. Component of the retromer-mediated endosome-to-Golgi retrograde pathway. Required for efficient cargo export from the endosome, promoting Vps1-mediated fission of retromer-coated tubules that bud from the endosome. The chain is Sorting nexin mvp1 (mvp1) from Schizosaccharomyces pombe (strain 972 / ATCC 24843) (Fission yeast).